The sequence spans 146 residues: Protein ADM2 (146 aa).

The N-terminal stretch at 1 to 25 (MAQLLMVTVTFGCISLLYLLPGTLS) is a signal peptide. The propeptide occupies 26–96 (GSLGKGLRPR…HPGPQRHVGS (71 aa)). The segment at 29-99 (GKGLRPREPP…PQRHVGSRRP (71 aa)) is disordered. An intrachain disulfide couples cysteine 108 to cysteine 113. Tyrosine 145 is subject to Tyrosine amide.

Belongs to the adrenomedullin family. In terms of tissue distribution, expression was restricted to the intermediate and anterior lobes of the pituitary.

It is found in the secreted. Its function is as follows. Intermedin/ADM2 is a peptide hormone that plays a role as physiological regulator of gastrointestinal and cardiovascular bioactivities mediated by the CALCRL-RAMPs receptor complexes. Activates the cAMP-dependent pathway through interaction with CALCRL-RAMP3 receptor complex. The polypeptide is Protein ADM2 (Rattus norvegicus (Rat)).